A 168-amino-acid polypeptide reads, in one-letter code: Thiosulfate dehydrogenase [quinone] small subunit (168 aa).

The helical transmembrane segment at 6 to 26 (IIGIIFAILVVGWILATGQWA) threads the bilayer.

As to quaternary structure, heterodimer of a large and a small subunit in a 2:2 stoichiometry. TQO may associate with the terminal oxidase formed by doxBCE. In terms of processing, the N-terminus is blocked. Glycosylated.

It localises to the cell membrane. It catalyses the reaction 6-decylubiquinone + 2 thiosulfate = 6-decylubiquinol + tetrathionate. Its activity is regulated as follows. Inhibited by sulfite, metabisulfite and dithonite. Its function is as follows. TQO plays a role in sulfur oxidation and is proposed to couple sulfur oxidation to dioxygen reduction; caldariellaquinone or sulfolobus quinone seem to serve to transfer electrons to the electron transport chain terminal oxidase formed by DoxBCE. This is Thiosulfate dehydrogenase [quinone] small subunit (doxA) from Acidianus ambivalens (Desulfurolobus ambivalens).